Consider the following 176-residue polypeptide: Acireductone dioxygenase (176 aa).

The disordered stretch occupies residues 1-21 (MKAYWYDNKPGDQREPHDSGR). The segment covering 9-20 (KPGDQREPHDSG) has biased composition (basic and acidic residues). 4 residues coordinate Fe(2+): histidine 81, histidine 83, glutamate 87, and histidine 126. The Ni(2+) site is built by histidine 81, histidine 83, glutamate 87, and histidine 126.

It belongs to the acireductone dioxygenase (ARD) family. Requires Fe(2+) as cofactor. It depends on Ni(2+) as a cofactor.

The protein resides in the cytoplasm. It is found in the nucleus. It catalyses the reaction 1,2-dihydroxy-5-(methylsulfanyl)pent-1-en-3-one + O2 = 4-methylsulfanyl-2-oxobutanoate + formate + 2 H(+). The catalysed reaction is 1,2-dihydroxy-5-(methylsulfanyl)pent-1-en-3-one + O2 = 3-(methylsulfanyl)propanoate + CO + formate + 2 H(+). Its pathway is amino-acid biosynthesis; L-methionine biosynthesis via salvage pathway; L-methionine from S-methyl-5-thio-alpha-D-ribose 1-phosphate: step 5/6. Catalyzes 2 different reactions between oxygen and the acireductone 1,2-dihydroxy-3-keto-5-methylthiopentene (DHK-MTPene) depending upon the metal bound in the active site. Fe-containing acireductone dioxygenase (Fe-ARD) produces formate and 2-keto-4-methylthiobutyrate (KMTB), the alpha-ketoacid precursor of methionine in the methionine recycle pathway. Ni-containing acireductone dioxygenase (Ni-ARD) produces methylthiopropionate, carbon monoxide and formate, and does not lie on the methionine recycle pathway. This is Acireductone dioxygenase (adi1) from Aspergillus fumigatus (strain ATCC MYA-4609 / CBS 101355 / FGSC A1100 / Af293) (Neosartorya fumigata).